The following is a 222-amino-acid chain: Alpha-S2-casein (222 aa).

Positions 1-15 (MKFFIFTCLLAVALA) are cleaved as a signal peptide. 13 positions are modified to phosphoserine: Ser-23, Ser-24, Ser-25, Ser-28, Ser-46, Ser-71, Ser-72, Ser-73, Ser-76, Ser-144, Ser-146, Ser-150, and Ser-158. The segment at residues 76–140 (SAEVATEEVK…AVPITPTLNR (65 aa)) is a repeat. Positions 158 to 222 (STEVFTKKTK…TKVIPYVRYL (65 aa)) form a repeat.

The protein belongs to the alpha-casein family. In terms of tissue distribution, mammary gland specific. Secreted in milk.

It is found in the secreted. Its function is as follows. Important role in the capacity of milk to transport calcium phosphate. In terms of biological role, casocidin-I inhibits the growth of E.coli and S.carnosus. In Bos taurus (Bovine), this protein is Alpha-S2-casein (CSN1S2).